A 252-amino-acid polypeptide reads, in one-letter code: MQNYKVTISYDGHYFEGFQTQNRPGSRTVQDELIKVVSKMAKTKIKVIGASRTDAGVHANGQVINFIFPFDLNEKAILMGMNSQLPTDILVKKVEKVPINFNARHSSHRKRYLYRVSTSKFIDPFKRFYTGHYFWNLDTNKIQEALPDLIGEHDFSSFAASGNQTATTIRTVTKAELKIFPKNNELLFTFEGNAFLYNQIRIMVGVLLEIGNGTRPVHDIIRLIKIKDRQQARFTAPASGLYLDEVYYESMD.

Aspartate 54 (nucleophile) is an active-site residue. Tyrosine 112 contributes to the substrate binding site.

This sequence belongs to the tRNA pseudouridine synthase TruA family. As to quaternary structure, homodimer.

The enzyme catalyses uridine(38/39/40) in tRNA = pseudouridine(38/39/40) in tRNA. Formation of pseudouridine at positions 38, 39 and 40 in the anticodon stem and loop of transfer RNAs. The sequence is that of tRNA pseudouridine synthase A from Oenococcus oeni (strain ATCC BAA-331 / PSU-1).